The following is a 1341-amino-acid chain: DNA-directed RNA polymerase subunit beta (1341 aa).

The protein belongs to the RNA polymerase beta chain family. The RNAP catalytic core consists of 2 alpha, 1 beta, 1 beta' and 1 omega subunit. When a sigma factor is associated with the core the holoenzyme is formed, which can initiate transcription.

The catalysed reaction is RNA(n) + a ribonucleoside 5'-triphosphate = RNA(n+1) + diphosphate. In terms of biological role, DNA-dependent RNA polymerase catalyzes the transcription of DNA into RNA using the four ribonucleoside triphosphates as substrates. In Photobacterium profundum (strain SS9), this protein is DNA-directed RNA polymerase subunit beta.